The following is a 446-amino-acid chain: GTPase Der (446 aa).

EngA-type G domains lie at 3–167 and 180–353; these read PVLA…AFDE and IRLA…ASAT. Residues 9 to 16, 56 to 60, 119 to 122, 186 to 193, 233 to 237, and 298 to 301 contribute to the GTP site; these read GRPNVGKS, DTGGF, NKAE, DTAGL, and NKWD. One can recognise a KH-like domain in the interval 354-438; that stretch reads KKLATPVLTR…PMRIEMKSSR (85 aa).

The protein belongs to the TRAFAC class TrmE-Era-EngA-EngB-Septin-like GTPase superfamily. EngA (Der) GTPase family. As to quaternary structure, associates with the 50S ribosomal subunit.

Its function is as follows. GTPase that plays an essential role in the late steps of ribosome biogenesis. In Methylibium petroleiphilum (strain ATCC BAA-1232 / LMG 22953 / PM1), this protein is GTPase Der.